The following is a 318-amino-acid chain: Mitochondrial thiamine pyrophosphate carrier 1 (318 aa).

6 helical membrane passes run 12–28 (GTRR…GLVS), 91–107 (LMYV…YRTT), 125–141 (SFVA…ASTY), 181–197 (GCSA…GLFF), 221–237 (AAGV…VFPL), and 284–301 (GLTV…VTMW). Solcar repeat units lie at residues 12–110 (GTRR…TTQA), 120–206 (PPPA…LRPV), and 214–309 (PFGS…SLHY).

Belongs to the mitochondrial carrier (TC 2.A.29) family.

It is found in the mitochondrion inner membrane. Its function is as follows. Mitochondrial transporter that mediates uptake of thiamine pyrophosphate (ThPP) into mitochondria. The sequence is that of Mitochondrial thiamine pyrophosphate carrier 1 (tpc1) from Aspergillus oryzae (strain ATCC 42149 / RIB 40) (Yellow koji mold).